The following is a 235-amino-acid chain: Peroxisomal membrane protein 11C (235 aa).

Topologically, residues 1–91 (MSTLETTRAE…LPLVLLGKSK (91 aa)) are cytoplasmic. A helical transmembrane segment spans residues 92 to 108 (NALLSTFLFLDQIVWLG). Residues 109–206 (RTGIYKDKER…LLQLAPKKVT (98 aa)) are Lumenal-facing. A helical transmembrane segment spans residues 207–226 (PRVTGAFGFASSLISCYQLL). The Cytoplasmic portion of the chain corresponds to 227–235 (PSHPKSKMV).

Belongs to the peroxin-11 family. As to quaternary structure, homooligomer. Interacts with ARC5 and FIS1B on peroxisomes. In terms of tissue distribution, expressed in roots and developing siliques.

It is found in the peroxisome membrane. Involved in peroxisomal proliferation. Promotes peroxisomal duplication, aggregation or elongation without fission. The protein is Peroxisomal membrane protein 11C (PEX11C) of Arabidopsis thaliana (Mouse-ear cress).